We begin with the raw amino-acid sequence, 626 residues long: Phosphomethylpyrimidine synthase (626 aa).

The interval 1–22 (MTKQEKAINLSESAQVDQQSVQ) is disordered. The span at 10–22 (LSESAQVDQQSVQ) shows a compositional bias: polar residues. Residues asparagine 232, methionine 261, tyrosine 290, histidine 326, 346–348 (SRG), 387–390 (DGLR), and glutamate 426 contribute to the substrate site. Residue histidine 430 participates in Zn(2+) binding. Residue tyrosine 453 participates in substrate binding. Histidine 494 is a Zn(2+) binding site. 3 residues coordinate [4Fe-4S] cluster: cysteine 574, cysteine 577, and cysteine 582.

Belongs to the ThiC family. Homodimer. It depends on [4Fe-4S] cluster as a cofactor.

The catalysed reaction is 5-amino-1-(5-phospho-beta-D-ribosyl)imidazole + S-adenosyl-L-methionine = 4-amino-2-methyl-5-(phosphooxymethyl)pyrimidine + CO + 5'-deoxyadenosine + formate + L-methionine + 3 H(+). It functions in the pathway cofactor biosynthesis; thiamine diphosphate biosynthesis. Functionally, catalyzes the synthesis of the hydroxymethylpyrimidine phosphate (HMP-P) moiety of thiamine from aminoimidazole ribotide (AIR) in a radical S-adenosyl-L-methionine (SAM)-dependent reaction. In Pseudomonas putida (strain GB-1), this protein is Phosphomethylpyrimidine synthase.